A 180-amino-acid polypeptide reads, in one-letter code: Putative manganese efflux pump MntP (180 aa).

Helical transmembrane passes span 6–26, 34–54, 67–87, 102–122, 131–151, and 160–180; these read LMAL…GIGL, ILQI…TGWL, AAVI…WAAW, FWGL…AGFT, LLAA…GLVF, and GERA…KLFF.

Belongs to the MntP (TC 9.B.29) family.

It is found in the cell membrane. Its function is as follows. Probably functions as a manganese efflux pump. This Pelotomaculum thermopropionicum (strain DSM 13744 / JCM 10971 / SI) protein is Putative manganese efflux pump MntP.